Consider the following 119-residue polypeptide: V-type proton ATPase subunit F (119 aa).

The protein belongs to the V-ATPase F subunit family. In terms of assembly, V-ATPase is a heteromultimeric enzyme made up of two complexes: the ATP-hydrolytic V1 complex and the proton translocation V0 complex. The V1 complex consists of three catalytic AB heterodimers that form a heterohexamer, three peripheral stalks each consisting of EG heterodimers, one central rotor including subunits D and F, and the regulatory subunits C and H. The proton translocation complex V0 consists of the proton transport subunit a, a ring of proteolipid subunits c9c'', rotary subunit d, subunits e and f, and the accessory subunits ATP6AP1/Ac45 and ATP6AP2/PRR. In terms of tissue distribution, expressed in brain (at protein level).

Its subcellular location is the cytoplasmic vesicle. It localises to the secretory vesicle. The protein resides in the synaptic vesicle membrane. The protein localises to the clathrin-coated vesicle membrane. Subunit of the V1 complex of vacuolar(H+)-ATPase (V-ATPase), a multisubunit enzyme composed of a peripheral complex (V1) that hydrolyzes ATP and a membrane integral complex (V0) that translocates protons. V-ATPase is responsible for acidifying and maintaining the pH of intracellular compartments and in some cell types, is targeted to the plasma membrane, where it is responsible for acidifying the extracellular environment. The polypeptide is V-type proton ATPase subunit F (ATP6V1F) (Bos taurus (Bovine)).